Reading from the N-terminus, the 457-residue chain is Multidrug resistance protein MdtK (457 aa).

The next 12 membrane-spanning stretches (helical) occupy residues 11–31, 53–73, 93–113, 127–147, 160–180, 188–208, 243–263, 276–296, 314–334, 350–370, 387–407, and 418–438; these read LLAL…MGFV, IWLP…PVIA, WLAG…GYII, AVGY…FQVA, GMVM…IFIY, LGGI…FIAM, LPIA…ALLV, IALN…AAVT, AART…IFTV, VVAL…SDSI, IFFI…YILA, and PAGF…LMML.

Belongs to the multi antimicrobial extrusion (MATE) (TC 2.A.66.1) family. MdtK subfamily.

It is found in the cell inner membrane. Functionally, multidrug efflux pump that functions probably as a Na(+)/drug antiporter. The chain is Multidrug resistance protein MdtK from Salmonella agona (strain SL483).